The following is a 262-amino-acid chain: Ninja-family protein 2 (262 aa).

Residues 49–70 (RNSLACNTSKEAAGQSPKEMNA) form a disordered region.

It belongs to the Ninja family.

The protein localises to the nucleus. The sequence is that of Ninja-family protein 2 from Zea mays (Maize).